The primary structure comprises 120 residues: Basic phospholipase A2 homolog LmutTX (120 aa).

7 cysteine pairs are disulfide-bonded: Cys-26–Cys-114, Cys-28–Cys-44, Cys-43–Cys-95, Cys-49–Cys-120, Cys-50–Cys-88, Cys-57–Cys-81, and Cys-75–Cys-86.

Belongs to the phospholipase A2 family. Group II subfamily. K49 sub-subfamily. Monomer. In terms of tissue distribution, expressed by the venom gland.

Its subcellular location is the secreted. Its function is as follows. Snake venom phospholipase A2 homolog that lacks enzymatic activity. Shows moderate cytotoxicity against C2C12 myotubes (activity above 200 ug/mL). Also shows antibacterial activity against both Gram-positive and Gram-negative bacteria. A model of myotoxic mechanism has been proposed: an apo Lys49-PLA2 is activated by the entrance of a hydrophobic molecule (e.g. fatty acid) at the hydrophobic channel of the protein leading to a reorientation of a monomer. This reorientation causes a transition between 'inactive' to 'active' states, causing alignment of C-terminal and membrane-docking sites (MDoS) side-by-side and putting the membrane-disruption sites (MDiS) in the same plane, exposed to solvent and in a symmetric position for both monomers. The MDoS region stabilizes the toxin on membrane by the interaction of charged residues with phospholipid head groups. Subsequently, the MDiS region destabilizes the membrane with penetration of hydrophobic residues. This insertion causes a disorganization of the membrane, allowing an uncontrolled influx of ions (i.e. calcium and sodium), and eventually triggering irreversible intracellular alterations and cell death. This is Basic phospholipase A2 homolog LmutTX from Lachesis muta muta (Bushmaster).